We begin with the raw amino-acid sequence, 84 residues long: Large ribosomal subunit protein bL27 (84 aa).

Residues Met1 to Lys25 are disordered.

This sequence belongs to the bacterial ribosomal protein bL27 family.

This chain is Large ribosomal subunit protein bL27, found in Desulforapulum autotrophicum (strain ATCC 43914 / DSM 3382 / VKM B-1955 / HRM2) (Desulfobacterium autotrophicum).